The sequence spans 364 residues: MAWRTNLACLIKAGGRRWFPVPEYSSLPPVLNNTCSVRKSTAPEKRVASVAACDTDGKEPGNPLDRLFSLEQQASILQVLNTASDKELEAFRLLRGRKSVNIVEHRKKFGPFQRLENLIDVPLIQYKTAVEVCNSILCPENRRRKKSQEKWLLRKFIKPGVEQERLKAVKSIVSIVFGTRRIAWAHLDRRPTVLDWQQTECWKLTNKTYPTSFYLEEISSVISKIPKADLYILEKSGLSIQNTSLLPILLHFLITEAMLYALLNKTFAEDGQHRVLSINRNAVGKHFDLMIGDTRTSGRELVKQFLSESVLKERPRVFFPQDLLVQYRQKVVKSSYRIEELYDSLLQAVAFYELVFGKDSELKC.

Residues 1–39 (MAWRTNLACLIKAGGRRWFPVPEYSSLPPVLNNTCSVRK) constitute a mitochondrion transit peptide.

The protein belongs to the TEFM family. Interacts with POLRMT.

The protein resides in the mitochondrion matrix. It localises to the mitochondrion nucleoid. Transcription elongation factor which increases mitochondrial RNA polymerase processivity. Regulates transcription of the mitochondrial genome, including genes important for the oxidative phosphorylation machinery. The polypeptide is Transcription elongation factor, mitochondrial (Tefm) (Mus musculus (Mouse)).